Consider the following 982-residue polypeptide: Little elongation complex subunit 2 (982 aa).

Phosphoserine occurs at positions 17 and 326. The span at 410–427 shows a compositional bias: polar residues; that stretch reads TTKVSKSPSPASTSTVPN. Disordered regions lie at residues 410-450 and 473-504; these read TTKV…PDIS and GMDG…PLIQ. The segment covering 479 to 497 has biased composition (basic and acidic residues); it reads EECKNKDDQGFESCEKVSN. The residue at position 571 (Ser571) is a Phosphoserine. The residue at position 573 (Thr573) is a Phosphothreonine. 3 disordered regions span residues 595–623, 672–697, and 930–982; these read VGSN…NTAC, ENSK…KSGW, and PKSL…RKIT. The segment covering 597–610 has biased composition (low complexity); it reads SNLSSRPASPNSSS. Composition is skewed to polar residues over residues 611-623 and 672-683; these read GQAS…NTAC and ENSKQPSVSEQL. Positions 684 to 697 are enriched in low complexity; that stretch reads SGPSDSSSWPKSGW. Over residues 956-970 the composition is skewed to polar residues; sequence SMETKSSCLPAQQVE.

The protein belongs to the ICE2 family. As to quaternary structure, component of the little elongation complex (LEC), at least composed of ELL (ELL, ELL2 or ELL3), ZC3H8, ICE1 and ICE2. Interacts with ICE1 (via C-terminus domain). Interacts with ELL. As to expression, expressed at low levels in lung and testis.

It localises to the nucleus. Functionally, component of the little elongation complex (LEC), a complex required to regulate small nuclear RNA (snRNA) gene transcription by RNA polymerase II and III. This Homo sapiens (Human) protein is Little elongation complex subunit 2 (ICE2).